The sequence spans 427 residues: MKSVRVQPASNILGSVSFPGDKSISHRYGMLAALAEGTSRFKNFSTGADCASTLSCMEQLGAKVTHKDDGVIEVEGVAGQLRKSATQLDCGNSGSSMRMLSGILAAQPFDSELMGDASLSRRPMRRIVDPLKQMGGDIETTDGHAPLRVRGSKLTAIDYITPVPSAQVKSCVLFAGAFAAGITSVDEAIRTRDHGEIALKAFGAEVERRQNRVSVRGGAKFRAIEAVVPGDISSAAFFLCAAALFPTSNLVFDGILLNPSRAAILDVLASMGAKPKFLQVQEQHGELVGTITLAPAGLSGLKISGGLTASLIDELPVLAAIGAYTRYGIEIRDAKELRVKESDRIAVVCANLRAMGAEVEEFDDGLRVKGSQKLHGAEIESHEDHRIAMAFAVAALRAEGETVINGADCVAISYPEFFDTLNKVVER.

Positions 22, 23, and 27 each coordinate 3-phosphoshikimate. Residue Lys22 participates in phosphoenolpyruvate binding. The phosphoenolpyruvate site is built by Gly94 and Arg122. The 3-phosphoshikimate site is built by Ser165, Gln167, Asp313, and Lys340. Position 167 (Gln167) interacts with phosphoenolpyruvate. Asp313 acts as the Proton acceptor in catalysis. Positions 344 and 386 each coordinate phosphoenolpyruvate.

This sequence belongs to the EPSP synthase family. As to quaternary structure, monomer.

It is found in the cytoplasm. The catalysed reaction is 3-phosphoshikimate + phosphoenolpyruvate = 5-O-(1-carboxyvinyl)-3-phosphoshikimate + phosphate. The protein operates within metabolic intermediate biosynthesis; chorismate biosynthesis; chorismate from D-erythrose 4-phosphate and phosphoenolpyruvate: step 6/7. Functionally, catalyzes the transfer of the enolpyruvyl moiety of phosphoenolpyruvate (PEP) to the 5-hydroxyl of shikimate-3-phosphate (S3P) to produce enolpyruvyl shikimate-3-phosphate and inorganic phosphate. The polypeptide is 3-phosphoshikimate 1-carboxyvinyltransferase (Koribacter versatilis (strain Ellin345)).